The primary structure comprises 527 residues: Probable glucomannan 4-beta-mannosyltransferase 9 (527 aa).

The chain crosses the membrane as a helical span at residues 37 to 59 (AMSVMLFVEKVYMSVVLVGVHLF). The active site involves aspartate 131. Substrate contacts are provided by aspartate 190 and aspartate 192. Residue aspartate 284 is part of the active site. Transmembrane regions (helical) follow at residues 363 to 383 (IIGH…TVLI), 399 to 419 (IVTI…IFWV), 478 to 498 (ALEL…IAYG), and 505 to 525 (FLFL…GTIV).

Belongs to the glycosyltransferase 2 family. Plant cellulose synthase-like A subfamily.

The protein localises to the golgi apparatus membrane. It catalyses the reaction GDP-mannose + (glucomannan)n = GDP + (glucomannan)n+1.. In terms of biological role, probable mannan synthase which consists of a 4-beta-mannosyltransferase activity on mannan using GDP-mannose. The beta-1,4-mannan product is the backbone for galactomannan synthesis by galactomannan galactosyltransferase. Galactomannan is a noncellulosic polysaccharides of plant cell wall. The protein is Probable glucomannan 4-beta-mannosyltransferase 9 of Oryza sativa subsp. japonica (Rice).